The chain runs to 147 residues: Hemoglobin subunit epsilon (147 aa).

Residues 3–147 (HWSAEEKQLI…VAHALPRKYH (145 aa)) form the Globin domain. Residues His-64 and His-93 each contribute to the heme b site.

It belongs to the globin family. Heterotetramer of two epsilon chains and two alpha chains. As to expression, red blood cells.

Its function is as follows. Beta-type chain found in early embryos. The polypeptide is Hemoglobin subunit epsilon (HBE) (Cairina moschata (Muscovy duck)).